Reading from the N-terminus, the 729-residue chain is Golgin subfamily A member 5 (729 aa).

Ser-2 carries the N-acetylserine modification. The Cytoplasmic portion of the chain corresponds to 2 to 696 (SWFADLAGRA…IFLRRYPIAR (695 aa)). 2 positions are modified to dimethylated arginine: Arg-27 and Arg-89. 2 disordered regions span residues 89–222 (RTVG…SQEL) and 626–645 (SASSGPNSGSAINMSGVDSG). Position 116 is a phosphoserine (Ser-116). Positions 134 to 146 (PTGRVEVKKEKGR) are enriched in basic and acidic residues. Residues 148-167 (PVSPSSPSGVSSVNTSVTTT) show a composition bias toward low complexity. Polar residues-rich tracts occupy residues 175–186 (GSQSPGVNSSDS) and 626–638 (SASSGPNSGSAIN). Residues 215-629 (GSSRSQELSN…LEQQVHSASS (415 aa)) are a coiled coil. A helical; Anchor for type IV membrane protein membrane pass occupies residues 697 to 717 (VFVIIYMALLHLWVMIVLLTY). At 718–729 (SPEMHHDQPYGK) the chain is on the lumenal side.

In terms of assembly, homodimer. Interacts with RAB1A that has been activated by GTP-binding. Interacts with isoform CASP of CUX1. Post-translationally, highly phosphorylated during mitosis. Phosphorylation is barely detectable during interphase.

It is found in the golgi apparatus membrane. Involved in maintaining Golgi structure. Stimulates the formation of Golgi stacks and ribbons. Involved in intra-Golgi retrograde transport. This Mus musculus (Mouse) protein is Golgin subfamily A member 5 (Golga5).